The primary structure comprises 384 residues: Outer membrane protein assembly factor BamC (384 aa).

The N-terminal stretch at Met-1 to Gly-23 is a signal peptide. Cys-24 carries the N-palmitoyl cysteine lipid modification. Cys-24 is lipidated: S-diacylglycerol cysteine. Disordered regions lie at residues Leu-47 to Lys-70 and Gln-251 to Leu-273.

It belongs to the BamC family. Part of the Bam complex.

The protein resides in the cell outer membrane. Functionally, part of the outer membrane protein assembly complex, which is involved in assembly and insertion of beta-barrel proteins into the outer membrane. The sequence is that of Outer membrane protein assembly factor BamC from Accumulibacter regalis.